The following is a 404-amino-acid chain: MSKVTKVVLAYSGGLDTSAIIPWLKENYDCEVVAFVADVGQGAAELEGIEEKAIASGASSCYIADLKEEMVADYIYPSLKTGAIYEGKYLLGTSMARPIIAKAQVECALAVGADAVCHGCTGKGNDQVRFEGAYAALAPQLTVIAPWREWDLRSREALLDYLAERDIPCTASLEKIYSRDANAWHISTEGGVLENTWNQSNELCWVWTKDPENAPEKAETVSILVEKGEVVAVDGEAMSPFNALTYLNEKGAEHGVGRIDIVENRLVGIKSRGCYETPGGTIMNEALRAVEQLVLDKESYEFRETVGLKASHLIYDGRWFTPLCKSILAAADELAQDVSGEVVVKLYKGQATVIQKRSMNSLYSEEFATFGEDDVYDHSHAGGFIRLYSLASRIRALNTQKKQK.

Residues 10–18 and Ala-37 contribute to the ATP site; that span reads AYSGGLDTS. L-citrulline-binding residues include Tyr-89 and Ser-94. Position 119 (Gly-119) interacts with ATP. 3 residues coordinate L-aspartate: Thr-121, Asn-125, and Asp-126. Asn-125 is an L-citrulline binding site. L-citrulline is bound by residues Arg-129, Ser-178, Ser-187, Glu-263, and Tyr-275.

The protein belongs to the argininosuccinate synthase family. Type 1 subfamily. In terms of assembly, homotetramer.

It localises to the cytoplasm. The enzyme catalyses L-citrulline + L-aspartate + ATP = 2-(N(omega)-L-arginino)succinate + AMP + diphosphate + H(+). It participates in amino-acid biosynthesis; L-arginine biosynthesis; L-arginine from L-ornithine and carbamoyl phosphate: step 2/3. In Photobacterium profundum (strain SS9), this protein is Argininosuccinate synthase.